The sequence spans 288 residues: Glutamate racemase (288 aa).

Residues 10-11 (DS) and 42-43 (YG) each bind substrate. Cys-73 (proton donor/acceptor) is an active-site residue. 74 to 75 (NT) contributes to the substrate binding site. Cys-184 (proton donor/acceptor) is an active-site residue. 185-186 (TH) lines the substrate pocket.

The protein belongs to the aspartate/glutamate racemases family.

It carries out the reaction L-glutamate = D-glutamate. Its pathway is cell wall biogenesis; peptidoglycan biosynthesis. Provides the (R)-glutamate required for cell wall biosynthesis. The polypeptide is Glutamate racemase (Corynebacterium kroppenstedtii (strain DSM 44385 / JCM 11950 / CIP 105744 / CCUG 35717)).